Here is an 887-residue protein sequence, read N- to C-terminus: Integrator complex subunit 6 (887 aa).

The VWFA domain occupies 3 to 227; the sequence is ILLFLIDTSA…QCLESLVQKV (225 aa). The Inhibitory loop signature appears at 626–633; sequence MMIDEADE. At Ser-804 the chain carries Phosphoserine.

The protein belongs to the Integrator subunit 6 family. Component of the Integrator complex, composed of core subunits INTS1, INTS2, INTS3, INTS4, INTS5, INTS6, INTS7, INTS8, INTS9/RC74, INTS10, INTS11/CPSF3L, INTS12, INTS13, INTS14 and INTS15. The core complex associates with protein phosphatase 2A subunits PPP2CA and PPP2R1A, to form the Integrator-PP2A (INTAC) complex. As to expression, widely expressed. Expressed in heart, brain, placenta, lung, liver, skeletal muscle, kidney and pancreas.

It localises to the nucleus. The protein localises to the chromosome. In terms of biological role, component of the integrator complex, a multiprotein complex that terminates RNA polymerase II (Pol II) transcription in the promoter-proximal region of genes. The integrator complex provides a quality checkpoint during transcription elongation by driving premature transcription termination of transcripts that are unfavorably configured for transcriptional elongation: the complex terminates transcription by (1) catalyzing dephosphorylation of the C-terminal domain (CTD) of Pol II subunit POLR2A and SUPT5H/SPT5, (2) degrading the exiting nascent RNA transcript via endonuclease activity and (3) promoting the release of Pol II from bound DNA. The integrator complex is also involved in terminating the synthesis of non-coding Pol II transcripts, such as enhancer RNAs (eRNAs), small nuclear RNAs (snRNAs), telomerase RNAs and long non-coding RNAs (lncRNAs). Within the integrator complex, INTS6 acts as a molecular adapter that promotes assembly of protein phosphatase 2A (PP2A) subunits to the integrator core complex, promoting recruitment of PP2A to transcription pause-release checkpoint. Mediates recruitment of cytoplasmic dynein to the nuclear envelope, probably as component of the integrator complex. May have a tumor suppressor role; an ectopic expression suppressing tumor cell growth. This Homo sapiens (Human) protein is Integrator complex subunit 6.